Here is a 376-residue protein sequence, read N- to C-terminus: tRNA-specific 2-thiouridylase MnmA (376 aa).

ATP contacts are provided by residues Gly19–Ser26 and Met45. The interaction with target base in tRNA stretch occupies residues Asn105–Asp107. Residue Cys110 is the Nucleophile of the active site. A disulfide bond links Cys110 and Cys210. Residue Gly134 participates in ATP binding. Positions Lys160 to Gln162 are interaction with tRNA. Catalysis depends on Cys210, which acts as the Cysteine persulfide intermediate. The segment at Arg326–Tyr327 is interaction with tRNA.

The protein belongs to the MnmA/TRMU family.

The protein resides in the cytoplasm. The enzyme catalyses S-sulfanyl-L-cysteinyl-[protein] + uridine(34) in tRNA + AH2 + ATP = 2-thiouridine(34) in tRNA + L-cysteinyl-[protein] + A + AMP + diphosphate + H(+). In terms of biological role, catalyzes the 2-thiolation of uridine at the wobble position (U34) of tRNA, leading to the formation of s(2)U34. The polypeptide is tRNA-specific 2-thiouridylase MnmA (Bordetella petrii (strain ATCC BAA-461 / DSM 12804 / CCUG 43448)).